A 629-amino-acid chain; its full sequence is Chaperone protein DnaK (629 aa).

Thr195 carries the post-translational modification Phosphothreonine; by autocatalysis. 2 disordered regions span residues 514 to 533 (EAEQNAEADRKRRERVEKRN) and 543 to 629 (LGQL…KPAE). Residues 555–590 (DAKDRLKAAADEAEEAVRSDDDSRIERAQKQLEEAM) show a composition bias toward basic and acidic residues. Over residues 595 to 614 (TAAQSGSQNQAGQGAQTQTG) the composition is skewed to low complexity. The span at 615 to 629 (RQEDDVIDADFKPAE) shows a compositional bias: basic and acidic residues.

The protein belongs to the heat shock protein 70 family.

Functionally, acts as a chaperone. The sequence is that of Chaperone protein DnaK from Deinococcus geothermalis (strain DSM 11300 / CIP 105573 / AG-3a).